A 908-amino-acid polypeptide reads, in one-letter code: SH3 and PX domain-containing protein 2B (908 aa).

A PX domain is found at 5 to 129 (RSIVEVKVLD…QFFETRPEDL (125 aa)). Tyrosine 25 is subject to Phosphotyrosine. 2 consecutive SH3 domains span residues 152–211 (MVLE…GQDG) and 221–280 (EEEE…KNSG). Serine 279 and serine 291 each carry phosphoserine. 2 disordered regions span residues 280–300 (GEPLPPKLGPSSPAHSGALDL) and 315–366 (ELLN…PPIP). Over residues 315–337 (ELLNNQRDGRFEGRLVPDGDVKQ) the composition is skewed to basic and acidic residues. Basic residues predominate over residues 338–347 (RSPKMRQRPP). The SH3 3 domain occupies 368–427 (QVEEEYYTIAEFQTTIPDGISFQAGLKVEVIEKSLSGWWYIQMEDKEGWAPATFIDKYKK). A disordered region spans residues 455–832 (TENNTGPEAV…LGPRVTGKVG (378 aa)). Basic and acidic residues-rich tracts occupy residues 486–499 (KDWKGGKEAPRKAS), 516–546 (QEEKPSLPPRKESIIKSEEELLERERQKMEP), 569–584 (LARDSRKPEPKLDKSK), 595–606 (CGHKVLAKEVKK), and 615–625 (SKAELSEEKVD). Phosphoserine is present on residues serine 499 and serine 528. At tyrosine 661 the chain carries Phosphotyrosine. Over residues 671–684 (KSQEKALLDGESHH) the composition is skewed to basic and acidic residues. Pro residues predominate over residues 754-764 (VVPPRRPPPPK). Serine 840 bears the Phosphoserine mark. The 62-residue stretch at 847–908 (PKDSLYVAVA…IPSNYLRKKP (62 aa)) folds into the SH3 4 domain.

The protein belongs to the SH3PXD2 family. As to quaternary structure, interacts with NOXO1. Interacts (via SH3 domains) with NOXA1; the interaction is direct. Interacts with ADAM15. Interacts with FASLG. Phosphorylated in SRC-transformed cells. In terms of tissue distribution, highly expressed in the stromal-vascular fraction of white adipose tissue with moderate expression in heart, skeletal muscle and the mature adipocyte fraction of white adipose tissue. Also expressed in brain, spleen, kidney and liver. Expressed in white and brown adipose tissues, eye, lung, heart, brain, spleen, stomach, liver and skeletal muscle (at protein level). Not expressed in kidney or bone marrow.

Its subcellular location is the cytoplasm. It localises to the cell projection. It is found in the podosome. In terms of biological role, adapter protein involved in invadopodia and podosome formation and extracellular matrix degradation. Binds matrix metalloproteinases (ADAMs), NADPH oxidases (NOXs) and phosphoinositides. Acts as an organizer protein that allows NOX1- or NOX3-dependent reactive oxygen species (ROS) generation and ROS localization. Plays a role in mitotic clonal expansion during the immediate early stage of adipocyte differentiation. This chain is SH3 and PX domain-containing protein 2B (Sh3pxd2b), found in Mus musculus (Mouse).